Here is a 225-residue protein sequence, read N- to C-terminus: UPF0502 protein Ajs_3392 (225 aa).

This sequence belongs to the UPF0502 family.

The sequence is that of UPF0502 protein Ajs_3392 from Acidovorax sp. (strain JS42).